Here is a 154-residue protein sequence, read N- to C-terminus: Myoglobin (154 aa).

The Globin domain maps to glycine 2–lysine 148. At serine 4 the chain carries Phosphoserine. Position 65 (histidine 65) interacts with nitrite. Histidine 65 serves as a coordination point for O2. Threonine 68 carries the phosphothreonine modification. Histidine 94 serves as a coordination point for heme b.

It belongs to the globin family. As to quaternary structure, monomeric.

It localises to the cytoplasm. The protein resides in the sarcoplasm. The enzyme catalyses Fe(III)-heme b-[protein] + nitric oxide + H2O = Fe(II)-heme b-[protein] + nitrite + 2 H(+). It carries out the reaction H2O2 + AH2 = A + 2 H2O. In terms of biological role, monomeric heme protein which primary function is to store oxygen and facilitate its diffusion within muscle tissues. Reversibly binds oxygen through a pentacoordinated heme iron and enables its timely and efficient release as needed during periods of heightened demand. Depending on the oxidative conditions of tissues and cells, and in addition to its ability to bind oxygen, it also has a nitrite reductase activity whereby it regulates the production of bioactive nitric oxide. Under stress conditions, like hypoxia and anoxia, it also protects cells against reactive oxygen species thanks to its pseudoperoxidase activity. The chain is Myoglobin (MB) from Lutra lutra (European river otter).